A 95-amino-acid polypeptide reads, in one-letter code: Large ribosomal subunit protein bL25 (95 aa).

It belongs to the bacterial ribosomal protein bL25 family. Part of the 50S ribosomal subunit; part of the 5S rRNA/L5/L18/L25 subcomplex. Contacts the 5S rRNA. Binds to the 5S rRNA independently of L5 and L18.

Functionally, this is one of the proteins that binds to the 5S RNA in the ribosome where it forms part of the central protuberance. The protein is Large ribosomal subunit protein bL25 of Yersinia enterocolitica serotype O:8 / biotype 1B (strain NCTC 13174 / 8081).